A 416-amino-acid chain; its full sequence is (S)-ureidoglycine--glyoxylate transaminase (416 aa).

The residue at position 198 (Lys-198) is an N6-(pyridoxal phosphate)lysine.

Belongs to the class-V pyridoxal-phosphate-dependent aminotransferase family. In terms of assembly, homodimer. Pyridoxal 5'-phosphate is required as a cofactor.

It catalyses the reaction (S)-2-ureidoglycine + glyoxylate = N-carbamoyl-2-oxoglycine + glycine. Its pathway is nitrogen metabolism; (S)-allantoin degradation. Catalyzes the transamination between an unstable intermediate ((S)-ureidoglycine) and the end product of purine catabolism (glyoxylate) to yield oxalurate and glycine. Glyoxylate is the preferred substrate, but other amino-group acceptors can be used. This is (S)-ureidoglycine--glyoxylate transaminase from Bacillus subtilis (strain 168).